Reading from the N-terminus, the 407-residue chain is Imidazolonepropionase (407 aa).

Residues H68 and H70 each coordinate Fe(3+). Zn(2+) contacts are provided by H68 and H70. Residues R77, Y140, and H173 each coordinate 4-imidazolone-5-propanoate. Y140 contacts N-formimidoyl-L-glutamate. Fe(3+) is bound at residue H238. H238 contacts Zn(2+). Residue Q241 participates in 4-imidazolone-5-propanoate binding. Position 313 (D313) interacts with Fe(3+). Position 313 (D313) interacts with Zn(2+). N-formimidoyl-L-glutamate-binding residues include N315 and G317. T318 contacts 4-imidazolone-5-propanoate.

Belongs to the metallo-dependent hydrolases superfamily. HutI family. The cofactor is Zn(2+). Requires Fe(3+) as cofactor.

It localises to the cytoplasm. The enzyme catalyses 4-imidazolone-5-propanoate + H2O = N-formimidoyl-L-glutamate. Its pathway is amino-acid degradation; L-histidine degradation into L-glutamate; N-formimidoyl-L-glutamate from L-histidine: step 3/3. In terms of biological role, catalyzes the hydrolytic cleavage of the carbon-nitrogen bond in imidazolone-5-propanoate to yield N-formimidoyl-L-glutamate. It is the third step in the universal histidine degradation pathway. This Burkholderia cenocepacia (strain ATCC BAA-245 / DSM 16553 / LMG 16656 / NCTC 13227 / J2315 / CF5610) (Burkholderia cepacia (strain J2315)) protein is Imidazolonepropionase.